The sequence spans 324 residues: MKRTIAIVAGGDTSEFHVSLRSAQGIYSFIDKEKYTLYIVEMQGTRWEVQLPDGAKAPVDRNDFSFMLGTEKIRFDFAYITIHGTPGEDGRLQGYFDMMHIPYSCCGVLAAAITYDKFTCNQYLKAFGVRIAESLLLRQGQSVSDEDVMEKIGLPCFIKPSLGGSSFGVTKVKTKEQIQPAIVKAFEEAQEVLVEAFMEGTELTCGCYKTKDKTVIFPPTEVVTHNEFFDYDAKYNGQVDEITPARISDELTNRVQMLTSAIYDILGCSGIIRVDYIVTAGEKINLLEVNTTPGMTTTSFIPQQVRAAGLDIKDVMTDIIENKF.

An ATP-grasp domain is found at asparagine 121–glutamate 321. ATP is bound at residue methionine 149–threonine 204. Residues aspartate 275, glutamate 288, and asparagine 290 each contribute to the Mg(2+) site.

This sequence belongs to the D-alanine--D-alanine ligase family. Mg(2+) is required as a cofactor. The cofactor is Mn(2+).

The protein localises to the cytoplasm. It carries out the reaction 2 D-alanine + ATP = D-alanyl-D-alanine + ADP + phosphate + H(+). The protein operates within cell wall biogenesis; peptidoglycan biosynthesis. Functionally, cell wall formation. The sequence is that of D-alanine--D-alanine ligase from Bacteroides thetaiotaomicron (strain ATCC 29148 / DSM 2079 / JCM 5827 / CCUG 10774 / NCTC 10582 / VPI-5482 / E50).